Here is a 286-residue protein sequence, read N- to C-terminus: MFDSIKIALQYITPKHLISRLVGKLAAAKAGGLTTGLIKLFIKQYKVNMAEAERENPADYASFNEFFTRALKDDARVICPNEQDLAMPVDGAVSQLGDIKHDSIFQAKGHDYSLTTLLGGKPELATAFKNGKFATVYLSPKDYHRIHMPMDGQLTDMVYVPGELFSVSPLTAERVPGLFARNERVVAIFDTPKGKMAMVLVGATIVASIETVWAGTVSPPVGKNVVHWQYPSEGEDAVFLKKGDELGRFKLGSTIVACFEPDMVEFADYSAGDDTRLGDVFATLTQ.

Residues D90, H147, and S253 each act as charge relay system; for autoendoproteolytic cleavage activity in the active site. S253 acts as the Schiff-base intermediate with substrate; via pyruvic acid; for decarboxylase activity in catalysis. The residue at position 253 (S253) is a Pyruvic acid (Ser); by autocatalysis.

It belongs to the phosphatidylserine decarboxylase family. PSD-B subfamily. Prokaryotic type I sub-subfamily. As to quaternary structure, heterodimer of a large membrane-associated beta subunit and a small pyruvoyl-containing alpha subunit. Requires pyruvate as cofactor. Post-translationally, is synthesized initially as an inactive proenzyme. Formation of the active enzyme involves a self-maturation process in which the active site pyruvoyl group is generated from an internal serine residue via an autocatalytic post-translational modification. Two non-identical subunits are generated from the proenzyme in this reaction, and the pyruvate is formed at the N-terminus of the alpha chain, which is derived from the carboxyl end of the proenzyme. The autoendoproteolytic cleavage occurs by a canonical serine protease mechanism, in which the side chain hydroxyl group of the serine supplies its oxygen atom to form the C-terminus of the beta chain, while the remainder of the serine residue undergoes an oxidative deamination to produce ammonia and the pyruvoyl prosthetic group on the alpha chain. During this reaction, the Ser that is part of the protease active site of the proenzyme becomes the pyruvoyl prosthetic group, which constitutes an essential element of the active site of the mature decarboxylase.

It is found in the cell membrane. The enzyme catalyses a 1,2-diacyl-sn-glycero-3-phospho-L-serine + H(+) = a 1,2-diacyl-sn-glycero-3-phosphoethanolamine + CO2. Its pathway is phospholipid metabolism; phosphatidylethanolamine biosynthesis; phosphatidylethanolamine from CDP-diacylglycerol: step 2/2. Functionally, catalyzes the formation of phosphatidylethanolamine (PtdEtn) from phosphatidylserine (PtdSer). The protein is Phosphatidylserine decarboxylase proenzyme of Pseudoalteromonas atlantica (strain T6c / ATCC BAA-1087).